A 169-amino-acid chain; its full sequence is EP300-interacting inhibitor of differentiation 1 (169 aa).

The tract at residues 31-50 (GRGARGPAPEEGPMEEEAGP) is disordered. The interval 54 to 120 (RAQRGLFPEA…AGDALDGGFQ (67 aa)) is interaction with NR0B2. The LXCXE motif motif lies at 150–154 (LGCDE).

As to quaternary structure, interacts via its LXCXE motif with the entire pocket region of RB1. Interacts with EP300, NR0B2 and TRIM27. Expressed in all adult tissues examined and during embryogenesis.

The protein resides in the nucleus. It localises to the cytoplasm. Functionally, interacts with RB1 and EP300 and acts as a repressor of MYOD1 transactivation. Inhibits EP300 and CBP histone acetyltransferase activity. May be involved in coupling cell cycle exit to the transcriptional activation of genes required for cellular differentiation. May act as a candidate coinhibitory factor for NR0B2 that can be directly linked to transcription inhibitory mechanisms. This Mus musculus (Mouse) protein is EP300-interacting inhibitor of differentiation 1.